We begin with the raw amino-acid sequence, 285 residues long: tRNA-cytidine(32) 2-sulfurtransferase (285 aa).

Residues 48–53 carry the PP-loop motif motif; it reads SGGKDS. [4Fe-4S] cluster contacts are provided by Cys-122, Cys-125, and Cys-213.

This sequence belongs to the TtcA family. Homodimer. Mg(2+) is required as a cofactor. Requires [4Fe-4S] cluster as cofactor.

The protein localises to the cytoplasm. It carries out the reaction cytidine(32) in tRNA + S-sulfanyl-L-cysteinyl-[cysteine desulfurase] + AH2 + ATP = 2-thiocytidine(32) in tRNA + L-cysteinyl-[cysteine desulfurase] + A + AMP + diphosphate + H(+). The protein operates within tRNA modification. Its function is as follows. Catalyzes the ATP-dependent 2-thiolation of cytidine in position 32 of tRNA, to form 2-thiocytidine (s(2)C32). The sulfur atoms are provided by the cysteine/cysteine desulfurase (IscS) system. The polypeptide is tRNA-cytidine(32) 2-sulfurtransferase (Cytophaga hutchinsonii (strain ATCC 33406 / DSM 1761 / CIP 103989 / NBRC 15051 / NCIMB 9469 / D465)).